Consider the following 130-residue polypeptide: Anti-adapter protein IraD (130 aa).

The protein belongs to the GpW/Gp25 family. IraD subfamily. As to quaternary structure, interacts with RssB.

Its subcellular location is the cytoplasm. In terms of biological role, inhibits RpoS proteolysis by regulating RssB activity, thereby increasing the stability of the sigma stress factor RpoS during oxidative stress. Its effect on RpoS stability is due to its interaction with RssB, which probably blocks the interaction of RssB with RpoS, and the consequent delivery of the RssB-RpoS complex to the ClpXP protein degradation pathway. The protein is Anti-adapter protein IraD of Shigella boydii serotype 4 (strain Sb227).